We begin with the raw amino-acid sequence, 288 residues long: Elongation factor Ts (288 aa).

Residues 82–85 are involved in Mg(2+) ion dislocation from EF-Tu; it reads TDFV.

This sequence belongs to the EF-Ts family.

The protein resides in the cytoplasm. In terms of biological role, associates with the EF-Tu.GDP complex and induces the exchange of GDP to GTP. It remains bound to the aminoacyl-tRNA.EF-Tu.GTP complex up to the GTP hydrolysis stage on the ribosome. This is Elongation factor Ts from Chlorobium luteolum (strain DSM 273 / BCRC 81028 / 2530) (Pelodictyon luteolum).